The following is a 323-amino-acid chain: Sphingolipid delta(4)-desaturase DES1 (323 aa).

A lipid anchor (N-myristoyl glycine) is attached at Gly-2. Transmembrane regions (helical) follow at residues 41 to 61 (SNLIWIVIMMVLTQFVAFYLV) and 68 to 88 (WVLFWAYAFGSCVNHSMTLAI). The short motif at 89-93 (HEVSH) is the Histidine box-1 element. Residues 102–122 (AMWNRWFGIFANLPIGVPYSV) form a helical membrane-spanning segment. A Histidine box-2 motif is present at residues 128–132 (HMDHH). 3 consecutive transmembrane segments (helical) span residues 152-172 (FFCTTFRKFIWVILQPLFYAF), 184-204 (YLEIINTVIQITFDIVVYYVL), and 209-229 (LVYMLAASLFGLGLHPISGHF). The short motif at 259-263 (HNEHH) is the Histidine box-3 element. Position 307 is a phosphoserine (Ser-307).

Belongs to the fatty acid desaturase type 1 family. DEGS subfamily. In terms of assembly, interacts with RLBP1; the interaction increases synthesis of chromophore-precursors by DEGS1. Post-translationally, myristoylation can target the enzyme to the mitochondria leading to an increase in ceramide levels.

Its subcellular location is the mitochondrion membrane. The protein localises to the endoplasmic reticulum membrane. It carries out the reaction an N-acylsphinganine + 2 Fe(II)-[cytochrome b5] + O2 + 2 H(+) = an N-acylsphing-4-enine + 2 Fe(III)-[cytochrome b5] + 2 H2O. The catalysed reaction is all-trans-retinol = 11-cis-retinol. It catalyses the reaction all-trans-retinol = 9-cis-retinol. The enzyme catalyses all-trans-retinol = 13-cis-retinol. It carries out the reaction 11-cis-retinol = 13-cis-retinol. The catalysed reaction is 11-cis-retinol = 9-cis-retinol. In terms of biological role, has sphingolipid-delta-4-desaturase activity. Converts D-erythro-sphinganine to D-erythro-sphingosine (E-sphing-4-enine). Catalyzes the equilibrium isomerization of retinols. In Bos taurus (Bovine), this protein is Sphingolipid delta(4)-desaturase DES1 (DEGS1).